We begin with the raw amino-acid sequence, 212 residues long: Large ribosomal subunit protein uL3 (212 aa).

Residues 135–155 are compositionally biased toward polar residues; it reads ATHGNSVSHRAHGSTGQNQSP. The interval 135 to 162 is disordered; it reads ATHGNSVSHRAHGSTGQNQSPGKVFKGK. N5-methylglutamine is present on Gln153.

Belongs to the universal ribosomal protein uL3 family. As to quaternary structure, part of the 50S ribosomal subunit. Forms a cluster with proteins L14 and L19. Methylated by PrmB.

One of the primary rRNA binding proteins, it binds directly near the 3'-end of the 23S rRNA, where it nucleates assembly of the 50S subunit. The sequence is that of Large ribosomal subunit protein uL3 from Psychrobacter arcticus (strain DSM 17307 / VKM B-2377 / 273-4).